A 160-amino-acid polypeptide reads, in one-letter code: MASNSTADGKDRFFSALIYVIPLIDAFMFGGFLLQQFPVLQIIYLPIMPLLQFYYQFPFASFIIFIVLFMAVVRNNNISHFIRFNAMQAILIGILLSLFGLIVAYVIQPVFGQGLVTETLYNFAFLGALACGFFGIVQSVLGRYAEIPTISDAAYSQVRF.

4 consecutive transmembrane segments (helical) span residues F13–L33, F53–V73, M87–I107, and N122–G142.

This sequence belongs to the Tic20 family.

The protein localises to the cell membrane. The protein is Tic20 family protein of Synechocystis sp. (strain ATCC 27184 / PCC 6803 / Kazusa).